Here is a 384-residue protein sequence, read N- to C-terminus: Polar flagellin C (384 aa).

Positions 317–347 (AKQNRLSHSINNLANIQENVDASNSRIKDTD) form a coiled coil.

The protein belongs to the bacterial flagellin family. As to quaternary structure, heteromer of multiple flagellin subunits including FlaA, FlaB/D, FlaC, FlaE and FlaF. Homomer of FlaC is not able to form a functional filament.

The protein resides in the secreted. The protein localises to the bacterial flagellum. Functionally, flagellin is the subunit protein which polymerizes to form the filaments of bacterial flagella. FlaC is not essential for polar flagellar synthesis and swimming motility. Homomer of FlaC is not able to form a functional filament. This is Polar flagellin C (flaC) from Vibrio parahaemolyticus serotype O3:K6 (strain RIMD 2210633).